Reading from the N-terminus, the 316-residue chain is Small ribosomal subunit protein RACK1 (316 aa).

WD repeat units lie at residues 13-44 (GHNG…IIWN), 61-91 (GHSH…RLWE), 103-133 (GHTN…KLWN), 146-178 (GHTE…KVWE), 190-220 (GHTG…MLWD), 231-260 (NAND…IIFD), and 281-311 (SREP…RAWG).

This sequence belongs to the WD repeat G protein beta family. Ribosomal protein RACK1 subfamily. In terms of assembly, component of the small ribosomal subunit (SSU). Mature N.crassa ribosomes consist of a small (40S) and a large (60S) subunit. The 40S small subunit contains 1 molecule of ribosomal RNA (18S rRNA) and at least 32 different proteins. The large 60S subunit contains 3 rRNA molecules (26S, 5.8S and 5S rRNA) and at least 42 different proteins.

The protein resides in the cytoplasm. Its function is as follows. Component of the ribosome, a large ribonucleoprotein complex responsible for the synthesis of proteins in the cell. The small ribosomal subunit (SSU) binds messenger RNAs (mRNAs) and translates the encoded message by selecting cognate aminoacyl-transfer RNA (tRNA) molecules. The large subunit (LSU) contains the ribosomal catalytic site termed the peptidyl transferase center (PTC), which catalyzes the formation of peptide bonds, thereby polymerizing the amino acids delivered by tRNAs into a polypeptide chain. The nascent polypeptides leave the ribosome through a tunnel in the LSU and interact with protein factors that function in enzymatic processing, targeting, and the membrane insertion of nascent chains at the exit of the ribosomal tunnel. Required to activate general amino acid control under conditions of amino acid limitation in the vegetative growth phase, and for formation of protoperithecia in preparation for the sexual phase of the life cycle of N.crassa. In Neurospora crassa (strain ATCC 24698 / 74-OR23-1A / CBS 708.71 / DSM 1257 / FGSC 987), this protein is Small ribosomal subunit protein RACK1 (cpc-2).